The sequence spans 331 residues: Cysteine and histidine-rich domain-containing protein 1 (331 aa).

Zn(2+) is bound by residues cysteine 5, cysteine 10, cysteine 24, histidine 27, cysteine 42, cysteine 43, cysteine 59, histidine 64, cysteine 157, cysteine 162, cysteine 176, histidine 179, cysteine 194, cysteine 195, cysteine 211, and histidine 216. 2 CHORD domains span residues 5-64 (CYNR…KGLH) and 157-216 (CKNA…TGTH). The 90-residue stretch at 227–316 (VVPCRHDWHQ…AEPLLWASLE (90 aa)) folds into the CS domain.

Functionally, regulates centrosome duplication. The sequence is that of Cysteine and histidine-rich domain-containing protein 1 (CHORDC1) from Gallus gallus (Chicken).